A 232-amino-acid chain; its full sequence is Large ribosomal subunit protein uL1 (232 aa).

It belongs to the universal ribosomal protein uL1 family. Part of the 50S ribosomal subunit.

Its function is as follows. Binds directly to 23S rRNA. The L1 stalk is quite mobile in the ribosome, and is involved in E site tRNA release. In terms of biological role, protein L1 is also a translational repressor protein, it controls the translation of the L11 operon by binding to its mRNA. In Xylella fastidiosa (strain M12), this protein is Large ribosomal subunit protein uL1.